Reading from the N-terminus, the 372-residue chain is NAD(P)H-quinone oxidoreductase subunit 1 (372 aa).

Transmembrane regions (helical) follow at residues 27-47 (VLWMPLPMLLMIIAATVGVLV), 97-117 (FLFTIGPALVVIPVFLSYLIV), 128-148 (VGAGVFLWIALSSIQPIGLLM), 176-196 (LALAVLAVVMMSNSLSTIDIV), 204-224 (ILGWNIWRQPVGFIIFWIAAL), 254-274 (FALFYVGSYVNLILSALLVSI), 308-328 (ALGITMTVLKAYLLVFTAILL), and 347-367 (FLLPISLVNLLVTAALKLTFP).

The protein belongs to the complex I subunit 1 family. As to quaternary structure, NDH-1 is composed of at least 11 different subunits.

It localises to the cellular thylakoid membrane. It catalyses the reaction a plastoquinone + NADH + (n+1) H(+)(in) = a plastoquinol + NAD(+) + n H(+)(out). The enzyme catalyses a plastoquinone + NADPH + (n+1) H(+)(in) = a plastoquinol + NADP(+) + n H(+)(out). Its function is as follows. NDH-1 shuttles electrons from an unknown electron donor, via FMN and iron-sulfur (Fe-S) centers, to quinones in the respiratory and/or the photosynthetic chain. The immediate electron acceptor for the enzyme in this species is believed to be plastoquinone. Couples the redox reaction to proton translocation, and thus conserves the redox energy in a proton gradient. The sequence is that of NAD(P)H-quinone oxidoreductase subunit 1 from Synechococcus elongatus (strain ATCC 33912 / PCC 7942 / FACHB-805) (Anacystis nidulans R2).